Consider the following 467-residue polypeptide: Glycogen synthase kinase-3 (467 aa).

Positions 1 to 20 are enriched in basic and acidic residues; the sequence is MSSKDQILEKDKKETDDNGN. Residues 1–42 form a disordered region; the sequence is MSSKDQILEKDKKETDDNGNKKTTTTTSSSSSSSSSSKPRSN. A compositionally biased stretch (low complexity) spans 23–37; it reads TTTTTSSSSSSSSSS. One can recognise a Protein kinase domain in the interval 56 to 339; it reads YITEGVIGNG…PVEICAHPFF (284 aa). ATP is bound by residues 62–70 and Lys-85; that span reads IGNGSFGVV. The Proton acceptor role is filled by Asp-179. Residues Tyr-214 and Tyr-220 each carry the phosphotyrosine; by zakA modification. Residues 400-467 are disordered; that stretch reads SSNQSSSSNS…TTTTTTTSNH (68 aa).

It belongs to the protein kinase superfamily. CMGC Ser/Thr protein kinase family. GSK-3 subfamily. The cofactor is Mg(2+).

The enzyme catalyses L-seryl-[tau protein] + ATP = O-phospho-L-seryl-[tau protein] + ADP + H(+). It carries out the reaction L-threonyl-[tau protein] + ATP = O-phospho-L-threonyl-[tau protein] + ADP + H(+). With respect to regulation, inhibited by lithium. Lithium inhibition is competitive with respect to magnesium but non-competitive with respect to the peptide substrate. Functionally, during cellular differentiation, may mediate an extracellular cyclic AMP stimulated signal transduction pathway that regulates prespore and prestalk B-cell proportions through inhibition of stalk cell formation and induction of prespore cell differentiation. The cAMP receptor carC appears to activate gskA via the tyrosine kinases zakA and zak2, to stimulate prespore differentiation, while carD appears to negatively regulate gskA, to promote prestalk formation. This is Glycogen synthase kinase-3 (gskA) from Dictyostelium discoideum (Social amoeba).